Consider the following 283-residue polypeptide: Pre-mRNA-splicing factor CWC23 (283 aa).

Residues 15–87 (NLYDVLELPT…DVRPHYDRWL (73 aa)) form the J domain.

This sequence belongs to the DnaJ family. In terms of assembly, belongs to the CWC complex (or CEF1-associated complex), a spliceosome sub-complex reminiscent of a late-stage spliceosome composed of the U2, U5 and U6 snRNAs and at least BUD13, BUD31, BRR2, CDC40, CEF1, CLF1, CUS1, CWC2, CWC15, CWC21, CWC22, CWC23, CWC24, CWC25, CWC27, ECM2, HSH155, IST3, ISY1, LEA1, MSL1, NTC20, PRP8, PRP9, PRP11, PRP19, PRP21, PRP22, PRP45, PRP46, SLU7, SMB1, SMD1, SMD2, SMD3, SMX2, SMX3, SNT309, SNU114, SPP2, SYF1, SYF2, RSE1 and YJU2.

The protein localises to the cytoplasm. Its subcellular location is the nucleus. Involved in pre-mRNA splicing. May be involved in endoplasmic reticulum-associated protein degradation (ERAD) and required for growth at low and high temperatures. The sequence is that of Pre-mRNA-splicing factor CWC23 (CWC23) from Saccharomyces cerevisiae (strain ATCC 204508 / S288c) (Baker's yeast).